The sequence spans 640 residues: MQTAENVEHLNFQAEAKQLLRLMIHSLYSNKEIFLRELISNASDAADKLRFEGLSDTALYESDPDLKIRIAYDKEARTITISDNGIGMSRQEVIDNIGTIAKSGTREFIDSLTGDQARDANLIGQFGVGFYSAFIVADKVTLTTRRAGLTTEHGVRWESSGEGEYTLETVEKRDRGTEVVLHLREDEDELLSSFQLRSIIRKYSDHITLPIIMKKEVWDDESKAYKISDEEETVNQASAIWARPKNEITQEQYDEFYKHVAHDFEPPLAHVHARVEGKQEYIQLLYIPAHAPFDLFDREHRHGLKLYIKRVFIMDDAEKLLPGYLRFVRGIIDSNDLPLNVSREILQESKDIDSIRAGSVKKVLGLIEDLATSDKSEDQEKFKIFWREFGQVLKEGVAEDYSNRERIAKLLRFTSTHDEQEEQTVSLDDYIARMKPEQEKIYYITADGLKAAQSSPHLEIFRKKGIEVLLLHDRIDEWLTANLNEYAGKSLQSIAKGDLDLGKLEDEVEKQEHEKEAGDFQELTAKMKEVLGELVKDVRITYRLTESPACLVADTHDMSGNLGRLLKSAGQKVPDSKPFLEINPHHPMVQRLKYEEAKFADWSHILFDQALLAEGGQLEDPASFVRRLNDLLLQNILSGK.

The interval 1 to 343 (MQTAENVEHL…SNDLPLNVSR (343 aa)) is a; substrate-binding. Residues 344 to 564 (EILQESKDID…THDMSGNLGR (221 aa)) are b. A c region spans residues 565–640 (LLKSAGQKVP…LLLQNILSGK (76 aa)).

It belongs to the heat shock protein 90 family. In terms of assembly, homodimer.

The protein resides in the cytoplasm. Molecular chaperone. Has ATPase activity. This Nitrosomonas eutropha (strain DSM 101675 / C91 / Nm57) protein is Chaperone protein HtpG.